Reading from the N-terminus, the 221-residue chain is Transcriptional regulatory protein QseB (221 aa).

Residues 2–116 (RILLIEDDNL…EVAARLQALI (115 aa)) form the Response regulatory domain. Asp-51 is modified (4-aspartylphosphate). The segment at residues 124–218 (HSVIEQAGVK…VHGVGYALGQ (95 aa)) is a DNA-binding region (ompR/PhoB-type).

In terms of processing, phosphorylated by QseC.

It localises to the cytoplasm. Functionally, member of a two-component regulatory system QseB/QseC. The protein is Transcriptional regulatory protein QseB (qseB) of Haemophilus influenzae (strain ATCC 51907 / DSM 11121 / KW20 / Rd).